We begin with the raw amino-acid sequence, 198 residues long: Na(+)-translocating NADH-quinone reductase subunit E (198 aa).

6 helical membrane passes run S11–V31, V35–V55, F77–I97, G110–V130, V140–I160, and L176–V196.

This sequence belongs to the NqrDE/RnfAE family. As to quaternary structure, composed of six subunits; NqrA, NqrB, NqrC, NqrD, NqrE and NqrF.

It localises to the cell inner membrane. The catalysed reaction is a ubiquinone + n Na(+)(in) + NADH + H(+) = a ubiquinol + n Na(+)(out) + NAD(+). Its function is as follows. NQR complex catalyzes the reduction of ubiquinone-1 to ubiquinol by two successive reactions, coupled with the transport of Na(+) ions from the cytoplasm to the periplasm. NqrA to NqrE are probably involved in the second step, the conversion of ubisemiquinone to ubiquinol. This chain is Na(+)-translocating NADH-quinone reductase subunit E, found in Histophilus somni (strain 129Pt) (Haemophilus somnus).